A 216-amino-acid chain; its full sequence is Large ribosomal subunit protein uL3 (216 aa).

Residues 132–155 are disordered; that stretch reads QDASHGNSRSHRVPGSIGQNQTPG. The residue at position 152 (Gln-152) is an N5-methylglutamine.

It belongs to the universal ribosomal protein uL3 family. Part of the 50S ribosomal subunit. Forms a cluster with proteins L14 and L19. Post-translationally, methylated by PrmB.

Its function is as follows. One of the primary rRNA binding proteins, it binds directly near the 3'-end of the 23S rRNA, where it nucleates assembly of the 50S subunit. This chain is Large ribosomal subunit protein uL3, found in Legionella pneumophila (strain Paris).